Reading from the N-terminus, the 532-residue chain is Probable cytochrome P450 524A1 (532 aa).

Residues 8 to 28 (FIIFILLAALAVFVSEATSKV) form a helical membrane-spanning segment. Cys478 lines the heme pocket.

This sequence belongs to the cytochrome P450 family. The cofactor is heme.

The protein localises to the membrane. The polypeptide is Probable cytochrome P450 524A1 (cyp524A1) (Dictyostelium discoideum (Social amoeba)).